The sequence spans 248 residues: Triosephosphate isomerase (248 aa).

Residue 14-16 (NWK) coordinates substrate. Residue H99 is the Electrophile of the active site. The active-site Proton acceptor is the E170. Residues G176, S212, and 233–234 (GG) each bind substrate.

Belongs to the triosephosphate isomerase family. In terms of assembly, homodimer.

The protein resides in the cytoplasm. The enzyme catalyses D-glyceraldehyde 3-phosphate = dihydroxyacetone phosphate. It participates in carbohydrate biosynthesis; gluconeogenesis. It functions in the pathway carbohydrate degradation; glycolysis; D-glyceraldehyde 3-phosphate from glycerone phosphate: step 1/1. Its function is as follows. Involved in the gluconeogenesis. Catalyzes stereospecifically the conversion of dihydroxyacetone phosphate (DHAP) to D-glyceraldehyde-3-phosphate (G3P). In Bordetella bronchiseptica (strain ATCC BAA-588 / NCTC 13252 / RB50) (Alcaligenes bronchisepticus), this protein is Triosephosphate isomerase.